The sequence spans 146 residues: Type II secretion system core protein G (146 aa).

A propeptide spans 1–9 (MKKMRKQTG) (leader sequence). Phe10 bears the N-methylphenylalanine mark. The helical transmembrane segment at 10 to 30 (FTLLEVMVVVVILGILASFVV) threads the bilayer.

The protein belongs to the GSP G family. As to quaternary structure, type II secretion system is composed of four main components: the outer membrane complex, the inner membrane complex, the cytoplasmic secretion ATPase and the periplasm-spanning pseudopilus. Forms homomultimers. Interacts with EspL. Cleaved by the prepilin peptidase. Post-translationally, methylated by prepilin peptidase at the amino group of the N-terminal phenylalanine once the leader sequence is cleaved.

It is found in the cell inner membrane. Core component of the type II secretion system required for the energy-dependent secretion of extracellular factors such as proteases and toxins from the periplasm. Pseudopilin (pilin-like) protein that polymerizes to form the pseudopilus. Further polymerization triggers pseudopilus growth. The chain is Type II secretion system core protein G (epsG) from Vibrio cholerae serotype O1 (strain ATCC 39315 / El Tor Inaba N16961).